Consider the following 45-residue polypeptide: Rubredoxin-1 (45 aa).

Position 1 is an N-formylmethionine (M1). The Rubredoxin-like domain occupies 1 to 45 (MQKYVCNVCGYEYDPAEHDNVPFDQLPDDWCCPVCGVSKDQFSPA). Fe cation contacts are provided by C6, C9, C32, and C35.

It belongs to the rubredoxin family. The cofactor is Fe(3+).

It localises to the cytoplasm. Functionally, rubredoxin is a small nonheme, iron protein lacking acid-labile sulfide. Its single Fe, chelated to 4 Cys, functions as an electron acceptor and may also stabilize the conformation of the molecule. Electron acceptor for cytoplasmic lactate dehydrogenase. In Desulfovibrio desulfuricans (strain ATCC 27774 / DSM 6949 / MB), this protein is Rubredoxin-1 (rd1).